Reading from the N-terminus, the 427-residue chain is Glutamate-1-semialdehyde 2,1-aminomutase 1 (427 aa).

K267 bears the N6-(pyridoxal phosphate)lysine mark.

This sequence belongs to the class-III pyridoxal-phosphate-dependent aminotransferase family. HemL subfamily. As to quaternary structure, homodimer. Pyridoxal 5'-phosphate serves as cofactor.

The protein localises to the cytoplasm. The catalysed reaction is (S)-4-amino-5-oxopentanoate = 5-aminolevulinate. Its pathway is porphyrin-containing compound metabolism; protoporphyrin-IX biosynthesis; 5-aminolevulinate from L-glutamyl-tRNA(Glu): step 2/2. This Macrococcus caseolyticus (strain JCSC5402) (Macrococcoides caseolyticum) protein is Glutamate-1-semialdehyde 2,1-aminomutase 1.